Reading from the N-terminus, the 378-residue chain is Ribosomal RNA large subunit methyltransferase G (378 aa).

It belongs to the methyltransferase superfamily. RlmG family.

The protein resides in the cytoplasm. The enzyme catalyses guanosine(1835) in 23S rRNA + S-adenosyl-L-methionine = N(2)-methylguanosine(1835) in 23S rRNA + S-adenosyl-L-homocysteine + H(+). Its function is as follows. Specifically methylates the guanine in position 1835 (m2G1835) of 23S rRNA. The polypeptide is Ribosomal RNA large subunit methyltransferase G (Escherichia coli (strain ATCC 8739 / DSM 1576 / NBRC 3972 / NCIMB 8545 / WDCM 00012 / Crooks)).